The sequence spans 278 residues: Potassium/proton antiporter CemA (278 aa).

4 helical membrane-spanning segments follow: residues 60 to 80, 163 to 183, 201 to 221, and 239 to 259; these read YLVL…SLVF, ILAF…IAVL, FLII…GWEV, and IFLF…YWIF.

Belongs to the CemA family.

The protein resides in the plastid. The protein localises to the chloroplast inner membrane. The catalysed reaction is K(+)(in) + H(+)(out) = K(+)(out) + H(+)(in). Its function is as follows. Contributes to K(+)/H(+) antiport activity by supporting proton efflux to control proton extrusion and homeostasis in chloroplasts in a light-dependent manner to modulate photosynthesis. Prevents excessive induction of non-photochemical quenching (NPQ) under continuous-light conditions. Indirectly promotes efficient inorganic carbon uptake into chloroplasts. The polypeptide is Potassium/proton antiporter CemA (Guillardia theta (Cryptophyte)).